The chain runs to 856 residues: Envelope glycoprotein gp160 (856 aa).

The first 32 residues, 1–32 (MRVKEKYQHLWRWGWRWGTMLLGMLMICSATE), serve as a signal peptide directing secretion. Topologically, residues 33-684 (KLWVTVYYGV…ITNWLWYIKL (652 aa)) are extracellular. Cysteines 54 and 74 form a disulfide. N-linked (GlcNAc...) asparagine; by host glycosylation is found at Asn-88, Asn-136, Asn-141, Asn-156, Asn-160, Asn-186, Asn-197, Asn-230, Asn-234, Asn-241, Asn-262, Asn-276, Asn-289, Asn-295, Asn-301, Asn-332, Asn-339, and Asn-356. Intrachain disulfides connect Cys-119–Cys-205, Cys-126–Cys-196, Cys-131–Cys-157, Cys-218–Cys-247, and Cys-228–Cys-239. Residues 131 to 156 (CTDLKNDTNTNSSSGRMIMEKGEIKN) form a V1 region. The segment at 157 to 196 (CSFNISTSIRGKVQKEYAFFYKLDIIPIDNDTTSYTLTSC) is V2. Residues 296 to 330 (CTRPNNNTRKSIRIQRGPGRAFVTIGKIGNMRQAH) form a V3 region. An intrachain disulfide couples Cys-296 to Cys-331. The CD4-binding loop stretch occupies residues 364-374 (SSGGDPEIVTH). Intrachain disulfides connect Cys-378–Cys-445 and Cys-385–Cys-418. The segment at 385 to 418 (CNSTQLFNSTWFNSTWSTKGSNNTEGSDTITLPC) is V4. N-linked (GlcNAc...) asparagine; by host glycosylation is found at Asn-386, Asn-392, Asn-397, Asn-406, Asn-448, and Asn-463. V5 stretches follow at residues 461–471 (SNNESEIFRPG) and 463–471 (NESEIFRPG). The tract at residues 512 to 532 (AVGIGALFLGFLGAAGSTMGA) is fusion peptide. The immunosuppression stretch occupies residues 574–592 (KQLQARILAVERYLKDQQL). Cysteines 598 and 604 form a disulfide. N-linked (GlcNAc...) asparagine; by host glycans are attached at residues Asn-611, Asn-616, Asn-625, and Asn-637. Residues 633-667 (REINNYTSLIHSLIEESQNQQEKNEQELLELDKWA) adopt a coiled-coil conformation. Residues 662–667 (ELDKWA) are involved in GalCer binding. The MPER; binding to GalCer stretch occupies residues 662-683 (ELDKWASLWNWFNITNWLWYIK). The N-linked (GlcNAc...) asparagine; by host glycan is linked to Asn-674. Residues 685–705 (FIMIVGGLVGLRIVFAVLSVV) form a helical membrane-spanning segment. Residues 706 to 856 (NRVRQGYSPL…IRQGLERILL (151 aa)) are Cytoplasmic-facing. The short motif at 712–715 (YSPL) is the YXXL motif; contains endocytosis signal element. A disordered region spans residues 721–740 (LPIPRGPDRPEGIEEEGGER). Cys-764 carries the S-palmitoyl cysteine; by host lipid modification. The Di-leucine internalization motif signature appears at 855–856 (LL).

The protein belongs to the HIV-1 env protein family. The mature envelope protein (Env) consists of a homotrimer of non-covalently associated gp120-gp41 heterodimers. The resulting complex protrudes from the virus surface as a spike. There seems to be as few as 10 spikes on the average virion. Interacts with host CD4, CCR5 and CXCR4. Gp120 also interacts with the C-type lectins CD209/DC-SIGN and CLEC4M/DC-SIGNR (collectively referred to as DC-SIGN(R)). Gp120 and gp41 interact with GalCer. Gp120 interacts with host ITGA4/ITGB7 complex; on CD4+ T-cells, this interaction results in rapid activation of integrin ITGAL/LFA-1, which facilitates efficient cell-to-cell spreading of HIV-1. Gp120 interacts with cell-associated heparan sulfate; this interaction increases virus infectivity on permissive cells and may be involved in infection of CD4- cells. As to quaternary structure, the mature envelope protein (Env) consists of a homotrimer of non-covalently associated gp120-gp41 heterodimers. The resulting complex protrudes from the virus surface as a spike. There seems to be as few as 10 spikes on the average virion. Highly glycosylated by host. The high number of glycan on the protein is reffered to as 'glycan shield' because it contributes to hide protein sequence from adaptive immune system. In terms of processing, palmitoylation of the transmembrane protein and of Env polyprotein (prior to its proteolytic cleavage) is essential for their association with host cell membrane lipid rafts. Palmitoylation is therefore required for envelope trafficking to classical lipid rafts, but not for viral replication. Post-translationally, specific enzymatic cleavages in vivo yield mature proteins. Envelope glycoproteins are synthesized as an inactive precursor that is heavily N-glycosylated and processed likely by host cell furin in the Golgi to yield the mature SU and TM proteins. The cleavage site between SU and TM requires the minimal sequence [KR]-X-[KR]-R. About 2 of the 9 disulfide bonds of gp41 are reduced by P4HB/PDI, following binding to CD4 receptor.

It localises to the virion membrane. The protein resides in the host cell membrane. It is found in the host endosome membrane. Oligomerizes in the host endoplasmic reticulum into predominantly trimers. In a second time, gp160 transits in the host Golgi, where glycosylation is completed. The precursor is then proteolytically cleaved in the trans-Golgi and thereby activated by cellular furin or furin-like proteases to produce gp120 and gp41. In terms of biological role, attaches the virus to the host lymphoid cell by binding to the primary receptor CD4. This interaction induces a structural rearrangement creating a high affinity binding site for a chemokine coreceptor like CXCR4 and/or CCR5. Acts as a ligand for CD209/DC-SIGN and CLEC4M/DC-SIGNR, which are respectively found on dendritic cells (DCs), and on endothelial cells of liver sinusoids and lymph node sinuses. These interactions allow capture of viral particles at mucosal surfaces by these cells and subsequent transmission to permissive cells. HIV subverts the migration properties of dendritic cells to gain access to CD4+ T-cells in lymph nodes. Virus transmission to permissive T-cells occurs either in trans (without DCs infection, through viral capture and transmission), or in cis (following DCs productive infection, through the usual CD4-gp120 interaction), thereby inducing a robust infection. In trans infection, bound virions remain infectious over days and it is proposed that they are not degraded, but protected in non-lysosomal acidic organelles within the DCs close to the cell membrane thus contributing to the viral infectious potential during DCs' migration from the periphery to the lymphoid tissues. On arrival at lymphoid tissues, intact virions recycle back to DCs' cell surface allowing virus transmission to CD4+ T-cells. Its function is as follows. Acts as a class I viral fusion protein. Under the current model, the protein has at least 3 conformational states: pre-fusion native state, pre-hairpin intermediate state, and post-fusion hairpin state. During fusion of viral and target intracellular membranes, the coiled coil regions (heptad repeats) assume a trimer-of-hairpins structure, positioning the fusion peptide in close proximity to the C-terminal region of the ectodomain. The formation of this structure appears to drive apposition and subsequent fusion of viral and target cell membranes. Complete fusion occurs in host cell endosomes and is dynamin-dependent, however some lipid transfer might occur at the plasma membrane. The virus undergoes clathrin-dependent internalization long before endosomal fusion, thus minimizing the surface exposure of conserved viral epitopes during fusion and reducing the efficacy of inhibitors targeting these epitopes. Membranes fusion leads to delivery of the nucleocapsid into the cytoplasm. The sequence is that of Envelope glycoprotein gp160 from Homo sapiens (Human).